The chain runs to 134 residues: Small ribosomal subunit protein uS8c (134 aa).

It belongs to the universal ribosomal protein uS8 family. Part of the 30S ribosomal subunit.

The protein localises to the plastid. One of the primary rRNA binding proteins, it binds directly to 16S rRNA central domain where it helps coordinate assembly of the platform of the 30S subunit. The chain is Small ribosomal subunit protein uS8c (rps8) from Cuscuta obtusiflora (Peruvian dodder).